Consider the following 629-residue polypeptide: tRNA uridine 5-carboxymethylaminomethyl modification enzyme MnmG (629 aa).

FAD-binding positions include 13 to 18, V125, and S180; that span reads GGGHAG. 273–287 lines the NAD(+) pocket; that stretch reads GPRYCPSIEDKIHRF. Q370 is an FAD binding site.

This sequence belongs to the MnmG family. In terms of assembly, homodimer. Heterotetramer of two MnmE and two MnmG subunits. FAD is required as a cofactor.

Its subcellular location is the cytoplasm. NAD-binding protein involved in the addition of a carboxymethylaminomethyl (cmnm) group at the wobble position (U34) of certain tRNAs, forming tRNA-cmnm(5)s(2)U34. This chain is tRNA uridine 5-carboxymethylaminomethyl modification enzyme MnmG, found in Shewanella sp. (strain MR-7).